The sequence spans 646 residues: Ribonuclease Y (646 aa).

Residues 4–24 (VLVVLLSLVLVVLSVLILAVA) traverse the membrane as a helical segment. 2 disordered regions span residues 43-62 (PRTP…DFDE) and 69-118 (LPAP…HGGS). In terms of domain architecture, KH spans 336-402 (VVTVLHLPGD…RITLAALVSD (67 aa)). The HD domain maps to 462 to 555 (VLAHLIESAH…TQAADQISGG (94 aa)).

This sequence belongs to the RNase Y family.

The protein resides in the cell membrane. In terms of biological role, endoribonuclease that initiates mRNA decay. The protein is Ribonuclease Y of Frankia casuarinae (strain DSM 45818 / CECT 9043 / HFP020203 / CcI3).